A 413-amino-acid polypeptide reads, in one-letter code: Divalent metal cation transporter MntH (413 aa).

Over 1–19 (MTDNRVENSSGRAARKLRL) the chain is Cytoplasmic. Residues 20-39 (ALMGPAFIAAIGYIDPGNFA) traverse the membrane as a helical segment. Over 40 to 51 (TNIQAGASFGYQ) the chain is Periplasmic. Residues 52–71 (LLWVVVWANLMAMLIQILSA) form a helical membrane-spanning segment. At 72–95 (KLGIATGKNLAEQIRDHYPRPVVW) the chain is on the cytoplasmic side. Residues 96 to 118 (FYWVQAEIIAMATDLAEFIGAAI) form a helical membrane-spanning segment. At 119 to 125 (GFKLILG) the chain is on the periplasmic side. A helical membrane pass occupies residues 126–145 (VSLLQGAVLTGIATFLILML). Topologically, residues 146–155 (QRRGQKPLEK) are cytoplasmic. Residues 156-175 (VIGGLLLFVAAAYIVELFFS) form a helical membrane-spanning segment. Residues 176 to 196 (QPDMAQLGKGMVIPALPNPEA) are Periplasmic-facing. The chain crosses the membrane as a helical span at residues 197 to 220 (VFLAAGVLGATIMPHVIYLHSSLT). Residues 221 to 238 (QHLHGGTRQQRYSATKWD) are Cytoplasmic-facing. A helical transmembrane segment spans residues 239 to 258 (VAIAMTIAGFVNLAMMATAA). The Periplasmic portion of the chain corresponds to 259–276 (AAFHFSGHTGIADLDQAY). The chain crosses the membrane as a helical span at residues 277–297 (LTLEPLLSHAAATVFGLSLVA). Residues 298–327 (AGLSSTVVGTLAGQVVMQGFVRFHIPLWVR) lie on the Cytoplasmic side of the membrane. A helical membrane pass occupies residues 328–344 (RTITMLPSFIVILMGLD). The Periplasmic portion of the chain corresponds to 345 to 350 (PTRILV). The helical transmembrane segment at 351 to 370 (MSQVLLSFGIALALVPLLIF) threads the bilayer. The Cytoplasmic segment spans residues 371 to 387 (TSNATLMGELVNTRRVK). The helical transmembrane segment at 388–406 (QIGWIIVVLVVALNIWLLV) threads the bilayer. At 407 to 413 (GTVMGLS) the chain is on the periplasmic side.

It belongs to the NRAMP family.

The protein localises to the cell inner membrane. Functionally, h(+)-stimulated, divalent metal cation uptake system. The sequence is that of Divalent metal cation transporter MntH from Salmonella schwarzengrund (strain CVM19633).